Here is a 374-residue protein sequence, read N- to C-terminus: SH2 domain-containing protein 2A (374 aa).

The SH2 domain maps to 116–207 (WFHGFITRRE…PYGEILTQPL (92 aa)). A disordered region spans residues 213 to 232 (EPAGLSLRADSDSGSKRQDP). Residues 221 to 232 (ADSDSGSKRQDP) are compositionally biased toward basic and acidic residues. Serine 237 carries the phosphoserine modification. Residues 241–301 (QQGQAQASGH…QAPPINPIYQ (61 aa)) form a disordered region. Residues 256–266 (ASQQKATSQAS) are compositionally biased toward polar residues. The short motif at 267 to 273 (RPRPPIP) is the SH3-binding element. Pro residues predominate over residues 268–279 (PRPPIPAKPQLP). Serine 316 carries the post-translational modification Phosphoserine. 2 disordered regions span residues 321–340 (PSNI…IGHP) and 353–374 (GQVR…GSPS).

As to quaternary structure, interacts with KDR. Interacts with p56-LCK, TXK and ITK. In terms of processing, phosphorylated on tyrosine residues upon TCR-stimulation. As to expression, expression limited to tissues of the immune system and, in particular, activated T-cells and natural killer cells. Expressed in the thymus, lymph node, and to a lesser extent, in the spleen and bone marrow. According to PubMed:10553045, also expressed in the lung.

The protein localises to the cytoplasm. Its subcellular location is the cell membrane. Functionally, could be a T-cell-specific adapter protein involved in the control of T-cell activation. May play a role in p56-LCK-mediated T-cell signaling. Could be involved in the regulation of responses to T-cell activation stimuli, specifically proliferation and lymphokine production. Interactions with ITK and TXK may provide important biochemical links of these two important kinases with other components in the T-cell activation machinery. The chain is SH2 domain-containing protein 2A (Sh2d2a) from Mus musculus (Mouse).